A 260-amino-acid polypeptide reads, in one-letter code: Imidazole glycerol phosphate synthase subunit HisF (260 aa).

Catalysis depends on residues Asp11 and Asp130.

It belongs to the HisA/HisF family. As to quaternary structure, heterodimer of HisH and HisF.

Its subcellular location is the cytoplasm. It catalyses the reaction 5-[(5-phospho-1-deoxy-D-ribulos-1-ylimino)methylamino]-1-(5-phospho-beta-D-ribosyl)imidazole-4-carboxamide + L-glutamine = D-erythro-1-(imidazol-4-yl)glycerol 3-phosphate + 5-amino-1-(5-phospho-beta-D-ribosyl)imidazole-4-carboxamide + L-glutamate + H(+). Its pathway is amino-acid biosynthesis; L-histidine biosynthesis; L-histidine from 5-phospho-alpha-D-ribose 1-diphosphate: step 5/9. IGPS catalyzes the conversion of PRFAR and glutamine to IGP, AICAR and glutamate. The HisF subunit catalyzes the cyclization activity that produces IGP and AICAR from PRFAR using the ammonia provided by the HisH subunit. This Caulobacter sp. (strain K31) protein is Imidazole glycerol phosphate synthase subunit HisF.